The following is a 48-amino-acid chain: Large ribosomal subunit protein bL32 (48 aa).

Belongs to the bacterial ribosomal protein bL32 family.

This is Large ribosomal subunit protein bL32 from Helicobacter pylori (strain P12).